The chain runs to 388 residues: UDP-4-amino-4-deoxy-L-arabinose--oxoglutarate aminotransferase (388 aa).

Lys183 bears the N6-(pyridoxal phosphate)lysine mark.

The protein belongs to the DegT/DnrJ/EryC1 family. ArnB subfamily. In terms of assembly, homodimer. Requires pyridoxal 5'-phosphate as cofactor.

The enzyme catalyses UDP-4-amino-4-deoxy-beta-L-arabinose + 2-oxoglutarate = UDP-beta-L-threo-pentopyranos-4-ulose + L-glutamate. It participates in nucleotide-sugar biosynthesis; UDP-4-deoxy-4-formamido-beta-L-arabinose biosynthesis; UDP-4-deoxy-4-formamido-beta-L-arabinose from UDP-alpha-D-glucuronate: step 2/3. The protein operates within bacterial outer membrane biogenesis; lipopolysaccharide biosynthesis. Catalyzes the conversion of UDP-4-keto-arabinose (UDP-Ara4O) to UDP-4-amino-4-deoxy-L-arabinose (UDP-L-Ara4N). The modified arabinose is attached to lipid A and is required for resistance to polymyxin and cationic antimicrobial peptides. The polypeptide is UDP-4-amino-4-deoxy-L-arabinose--oxoglutarate aminotransferase (Shewanella sediminis (strain HAW-EB3)).